Here is a 312-residue protein sequence, read N- to C-terminus: Coiled-coil domain-containing protein 42 homolog (312 aa).

Coiled coils occupy residues 34–121 (RLLE…RLKE) and 172–233 (ATHQ…WESQ).

The protein belongs to the CFAP73 family.

The protein is Coiled-coil domain-containing protein 42 homolog of Nematostella vectensis (Starlet sea anemone).